The sequence spans 459 residues: ATP-dependent protease ATPase subunit HslU (459 aa).

ATP-binding positions include valine 18, 60–65, aspartate 269, glutamate 337, and arginine 409; that span reads GVGKTE.

This sequence belongs to the ClpX chaperone family. HslU subfamily. In terms of assembly, a double ring-shaped homohexamer of HslV is capped on each side by a ring-shaped HslU homohexamer. The assembly of the HslU/HslV complex is dependent on binding of ATP.

It is found in the cytoplasm. In terms of biological role, ATPase subunit of a proteasome-like degradation complex; this subunit has chaperone activity. The binding of ATP and its subsequent hydrolysis by HslU are essential for unfolding of protein substrates subsequently hydrolyzed by HslV. HslU recognizes the N-terminal part of its protein substrates and unfolds these before they are guided to HslV for hydrolysis. This is ATP-dependent protease ATPase subunit HslU from Myxococcus xanthus (strain DK1622).